The chain runs to 192 residues: Photosystem I assembly protein Ycf4 (192 aa).

The next 2 membrane-spanning stretches (helical) occupy residues 30-52 (YFWA…SSYL) and 72-94 (IAIG…AIAW).

It belongs to the Ycf4 family.

The protein resides in the cellular thylakoid membrane. In terms of biological role, seems to be required for the assembly of the photosystem I complex. In Thermosynechococcus vestitus (strain NIES-2133 / IAM M-273 / BP-1), this protein is Photosystem I assembly protein Ycf4.